The sequence spans 302 residues: ATP synthase subunit b 1 (302 aa).

A helical membrane pass occupies residues 5-22; sequence WFTVIAQGINFLLLLWLL. The tract at residues 278–302 is disordered; it reads GLPENEGTDNPEANPPHAEAKIPHA.

This sequence belongs to the ATPase B chain family. In terms of assembly, F-type ATPases have 2 components, F(1) - the catalytic core - and F(0) - the membrane proton channel. F(1) has five subunits: alpha(3), beta(3), gamma(1), delta(1), epsilon(1). F(0) has three main subunits: a(1), b(2) and c(10-14). The alpha and beta chains form an alternating ring which encloses part of the gamma chain. F(1) is attached to F(0) by a central stalk formed by the gamma and epsilon chains, while a peripheral stalk is formed by the delta and b chains.

Its subcellular location is the cell inner membrane. F(1)F(0) ATP synthase produces ATP from ADP in the presence of a proton or sodium gradient. F-type ATPases consist of two structural domains, F(1) containing the extramembraneous catalytic core and F(0) containing the membrane proton channel, linked together by a central stalk and a peripheral stalk. During catalysis, ATP synthesis in the catalytic domain of F(1) is coupled via a rotary mechanism of the central stalk subunits to proton translocation. In terms of biological role, component of the F(0) channel, it forms part of the peripheral stalk, linking F(1) to F(0). The chain is ATP synthase subunit b 1 from Pseudoalteromonas atlantica (strain T6c / ATCC BAA-1087).